We begin with the raw amino-acid sequence, 893 residues long: Translation initiation factor IF-2 (893 aa).

2 disordered regions span residues 135-169 (KAKAKADAEAKAKAKVLTEKPVQESAEDKAAKAEE) and 201-300 (ENEK…ESMD). Residues 201–224 (ENEKRWAEEEKARKEAEKTVDHHV) are compositionally biased toward basic and acidic residues. Positions 251 to 265 (PSANAGNNANANAGA) are enriched in low complexity. Residues 393-562 (SRAPVVTIMG…LLEAEVLELK (170 aa)) form the tr-type G domain. The interval 402–409 (GHVDHGKT) is G1. 402–409 (GHVDHGKT) contributes to the GTP binding site. The segment at 427–431 (GITQH) is G2. The interval 448 to 451 (DTPG) is G3. GTP is bound by residues 448–452 (DTPGH) and 502–505 (NKMD). The G4 stretch occupies residues 502–505 (NKMD). The G5 stretch occupies residues 538–540 (SAK).

The protein belongs to the TRAFAC class translation factor GTPase superfamily. Classic translation factor GTPase family. IF-2 subfamily.

It is found in the cytoplasm. Functionally, one of the essential components for the initiation of protein synthesis. Protects formylmethionyl-tRNA from spontaneous hydrolysis and promotes its binding to the 30S ribosomal subunits. Also involved in the hydrolysis of GTP during the formation of the 70S ribosomal complex. The protein is Translation initiation factor IF-2 of Shewanella halifaxensis (strain HAW-EB4).